The following is a 555-amino-acid chain: Glutamine--tRNA ligase (555 aa).

The 'HIGH' region signature appears at 34 to 44 (PEPNGYLHIGH). Residues 35–37 (EPN) and 41–47 (HIGHAKS) contribute to the ATP site. Residues Asp-67 and Tyr-212 each contribute to the L-glutamine site. ATP contacts are provided by residues Thr-231, 261–262 (RL), and 269–271 (MSK). A 'KMSKS' region motif is present at residues 268–272 (VMSKR). Positions 317–324 (TKQDNTIE) are interaction with tRNA.

The protein belongs to the class-I aminoacyl-tRNA synthetase family. In terms of assembly, monomer.

Its subcellular location is the cytoplasm. The enzyme catalyses tRNA(Gln) + L-glutamine + ATP = L-glutaminyl-tRNA(Gln) + AMP + diphosphate. This Salmonella newport (strain SL254) protein is Glutamine--tRNA ligase.